The following is a 400-amino-acid chain: Enoyl-[acyl-carrier-protein] reductase [NADH] (400 aa).

NAD(+) is bound by residues 48 to 53, 74 to 75, 111 to 112, and 139 to 140; these read GSSSGY, FE, DA, and LA. Tyr-225 is a substrate binding site. Tyr-235 acts as the Proton donor in catalysis. NAD(+) is bound by residues Lys-244 and 273 to 275; that span reads VVT.

This sequence belongs to the TER reductase family. As to quaternary structure, monomer.

The catalysed reaction is a 2,3-saturated acyl-[ACP] + NAD(+) = a (2E)-enoyl-[ACP] + NADH + H(+). It participates in lipid metabolism; fatty acid biosynthesis. Functionally, involved in the final reduction of the elongation cycle of fatty acid synthesis (FAS II). Catalyzes the reduction of a carbon-carbon double bond in an enoyl moiety that is covalently linked to an acyl carrier protein (ACP). In Shewanella oneidensis (strain ATCC 700550 / JCM 31522 / CIP 106686 / LMG 19005 / NCIMB 14063 / MR-1), this protein is Enoyl-[acyl-carrier-protein] reductase [NADH].